The primary structure comprises 884 residues: Schlafen family member 5 (884 aa).

574–581 (GLPGSGKT) contacts ATP.

This sequence belongs to the Schlafen family. Subgroup III subfamily.

In terms of biological role, may have a role in hematopoietic cell differentiation. The chain is Schlafen family member 5 (Slfn5) from Mus musculus (Mouse).